A 715-amino-acid chain; its full sequence is Fatty acid oxidation complex subunit alpha (715 aa).

Residues 1 to 190 (MIYQGKAITV…KVGAVDAVVA (190 aa)) are enoyl-CoA hydratase/isomerase. Residue Asp297 coordinates substrate. A 3-hydroxyacyl-CoA dehydrogenase region spans residues 312–715 (KDVKLAAVLG…MAKNGQKFFG (404 aa)). Residues Met325, Asp344, 401–403 (VVE), Lys408, and Ser430 each bind NAD(+). The active-site For 3-hydroxyacyl-CoA dehydrogenase activity is the His451. Asn454 is an NAD(+) binding site. Residues Asn501 and Tyr660 each coordinate substrate.

It in the N-terminal section; belongs to the enoyl-CoA hydratase/isomerase family. This sequence in the C-terminal section; belongs to the 3-hydroxyacyl-CoA dehydrogenase family. In terms of assembly, heterotetramer of two alpha chains (FadB) and two beta chains (FadA).

It catalyses the reaction a (3S)-3-hydroxyacyl-CoA + NAD(+) = a 3-oxoacyl-CoA + NADH + H(+). The catalysed reaction is a (3S)-3-hydroxyacyl-CoA = a (2E)-enoyl-CoA + H2O. It carries out the reaction a 4-saturated-(3S)-3-hydroxyacyl-CoA = a (3E)-enoyl-CoA + H2O. The enzyme catalyses (3S)-3-hydroxybutanoyl-CoA = (3R)-3-hydroxybutanoyl-CoA. It catalyses the reaction a (3Z)-enoyl-CoA = a 4-saturated (2E)-enoyl-CoA. The catalysed reaction is a (3E)-enoyl-CoA = a 4-saturated (2E)-enoyl-CoA. The protein operates within lipid metabolism; fatty acid beta-oxidation. Its function is as follows. Involved in the aerobic and anaerobic degradation of long-chain fatty acids via beta-oxidation cycle. Catalyzes the formation of 3-oxoacyl-CoA from enoyl-CoA via L-3-hydroxyacyl-CoA. It can also use D-3-hydroxyacyl-CoA and cis-3-enoyl-CoA as substrate. This Pseudomonas aeruginosa (strain LESB58) protein is Fatty acid oxidation complex subunit alpha.